A 421-amino-acid chain; its full sequence is Medium-chain specific acyl-CoA dehydrogenase, mitochondrial (421 aa).

A mitochondrion-targeting transit peptide spans 1–25 (MAAALRRGYKVLRSVSHFECRAQHT). Lys-69 is subject to N6-acetyllysine; alternate. Lys-69 carries the N6-succinyllysine; alternate modification. Position 79 is an N6-acetyllysine (Lys-79). 158–167 (YCVTEPSAGS) contacts FAD. Ser-167 serves as a coordination point for octanoyl-CoA. An N6-succinyllysine modification is found at Lys-179. 191–193 (WIT) is an FAD binding site. N6-acetyllysine; alternate is present on Lys-212. Lys-212 carries the N6-succinyllysine; alternate modification. Ser-216 is an octanoyl-CoA binding site. An N6-acetyllysine; alternate mark is found at Lys-217, Lys-259, and Lys-271. Lys-217, Lys-259, and Lys-271 each carry N6-succinyllysine; alternate. The octanoyl-CoA site is built by Asp-278 and Arg-281. An N6-acetyllysine modification is found at Lys-301. Residues 306-308 (RKT) and 316-317 (HQ) contribute to the FAD site. 2 residues coordinate octanoyl-CoA: Arg-349 and Thr-351. At Thr-351 the chain carries Phosphothreonine. 374–378 (QIFGG) is an FAD binding site. Residue Glu-401 coordinates octanoyl-CoA. Glu-401 functions as the Proton acceptor in the catalytic mechanism. 402–405 (GTAQ) contacts FAD.

This sequence belongs to the acyl-CoA dehydrogenase family. In terms of assembly, homotetramer. Interacts with the heterodimeric electron transfer flavoprotein ETF. The cofactor is FAD. In terms of processing, acetylated. Could occur at proximity of the cofactor-binding sites and reduce the catalytic activity. Could be deacetylated by SIRT3.

It is found in the mitochondrion matrix. The enzyme catalyses a medium-chain 2,3-saturated fatty acyl-CoA + oxidized [electron-transfer flavoprotein] + H(+) = a medium-chain (2E)-enoyl-CoA + reduced [electron-transfer flavoprotein]. It carries out the reaction pentanoyl-CoA + oxidized [electron-transfer flavoprotein] + H(+) = (2E)-pentenoyl-CoA + reduced [electron-transfer flavoprotein]. It catalyses the reaction hexanoyl-CoA + oxidized [electron-transfer flavoprotein] + H(+) = (2E)-hexenoyl-CoA + reduced [electron-transfer flavoprotein]. The catalysed reaction is octanoyl-CoA + oxidized [electron-transfer flavoprotein] + H(+) = (2E)-octenoyl-CoA + reduced [electron-transfer flavoprotein]. The enzyme catalyses decanoyl-CoA + oxidized [electron-transfer flavoprotein] + H(+) = (2E)-decenoyl-CoA + reduced [electron-transfer flavoprotein]. It carries out the reaction dodecanoyl-CoA + oxidized [electron-transfer flavoprotein] + H(+) = (2E)-dodecenoyl-CoA + reduced [electron-transfer flavoprotein]. It catalyses the reaction tetradecanoyl-CoA + oxidized [electron-transfer flavoprotein] + H(+) = (2E)-tetradecenoyl-CoA + reduced [electron-transfer flavoprotein]. The catalysed reaction is oxidized [electron-transfer flavoprotein] + hexadecanoyl-CoA + H(+) = (2E)-hexadecenoyl-CoA + reduced [electron-transfer flavoprotein]. The protein operates within lipid metabolism; mitochondrial fatty acid beta-oxidation. Its function is as follows. Medium-chain specific acyl-CoA dehydrogenase is one of the acyl-CoA dehydrogenases that catalyze the first step of mitochondrial fatty acid beta-oxidation, an aerobic process breaking down fatty acids into acetyl-CoA and allowing the production of energy from fats. The first step of fatty acid beta-oxidation consists in the removal of one hydrogen from C-2 and C-3 of the straight-chain fatty acyl-CoA thioester, resulting in the formation of trans-2-enoyl-CoA. Electron transfer flavoprotein (ETF) is the electron acceptor that transfers electrons to the main mitochondrial respiratory chain via ETF-ubiquinone oxidoreductase (ETF dehydrogenase). Among the different mitochondrial acyl-CoA dehydrogenases, medium-chain specific acyl-CoA dehydrogenase acts specifically on acyl-CoAs with saturated 6 to 12 carbons long primary chains. The sequence is that of Medium-chain specific acyl-CoA dehydrogenase, mitochondrial from Rattus norvegicus (Rat).